Reading from the N-terminus, the 829-residue chain is Probable beta-glucosidase H (829 aa).

Residue Asn13 is glycosylated (N-linked (GlcNAc...) asparagine). Residue Asp225 is part of the active site. Residues Asn304, Asn473, Asn602, Asn627, Asn664, and Asn749 are each glycosylated (N-linked (GlcNAc...) asparagine). Residues Arg389–Val548 form the PA14 domain.

Belongs to the glycosyl hydrolase 3 family.

It is found in the secreted. The catalysed reaction is Hydrolysis of terminal, non-reducing beta-D-glucosyl residues with release of beta-D-glucose.. It functions in the pathway glycan metabolism; cellulose degradation. Beta-glucosidases are one of a number of cellulolytic enzymes involved in the degradation of cellulosic biomass. Catalyzes the last step releasing glucose from the inhibitory cellobiose. This is Probable beta-glucosidase H (bglH) from Aspergillus fumigatus (strain CBS 144.89 / FGSC A1163 / CEA10) (Neosartorya fumigata).